The primary structure comprises 619 residues: Chaperone protein HscA homolog (619 aa).

It belongs to the heat shock protein 70 family.

Functionally, chaperone involved in the maturation of iron-sulfur cluster-containing proteins. Has a low intrinsic ATPase activity which is markedly stimulated by HscB. This is Chaperone protein HscA homolog from Laribacter hongkongensis (strain HLHK9).